The primary structure comprises 263 residues: 3-deoxy-manno-octulosonate cytidylyltransferase (263 aa).

The protein belongs to the KdsB family.

The protein resides in the cytoplasm. It catalyses the reaction 3-deoxy-alpha-D-manno-oct-2-ulosonate + CTP = CMP-3-deoxy-beta-D-manno-octulosonate + diphosphate. It participates in nucleotide-sugar biosynthesis; CMP-3-deoxy-D-manno-octulosonate biosynthesis; CMP-3-deoxy-D-manno-octulosonate from 3-deoxy-D-manno-octulosonate and CTP: step 1/1. The protein operates within bacterial outer membrane biogenesis; lipopolysaccharide biosynthesis. In terms of biological role, activates KDO (a required 8-carbon sugar) for incorporation into bacterial lipopolysaccharide in Gram-negative bacteria. The sequence is that of 3-deoxy-manno-octulosonate cytidylyltransferase from Burkholderia cenocepacia (strain ATCC BAA-245 / DSM 16553 / LMG 16656 / NCTC 13227 / J2315 / CF5610) (Burkholderia cepacia (strain J2315)).